Reading from the N-terminus, the 307-residue chain is Bifunctional protein FolD (307 aa).

NADP(+) contacts are provided by residues 165 to 167 (GRS), serine 190, and isoleucine 231.

Belongs to the tetrahydrofolate dehydrogenase/cyclohydrolase family. Homodimer.

The catalysed reaction is (6R)-5,10-methylene-5,6,7,8-tetrahydrofolate + NADP(+) = (6R)-5,10-methenyltetrahydrofolate + NADPH. It carries out the reaction (6R)-5,10-methenyltetrahydrofolate + H2O = (6R)-10-formyltetrahydrofolate + H(+). It functions in the pathway one-carbon metabolism; tetrahydrofolate interconversion. Its function is as follows. Catalyzes the oxidation of 5,10-methylenetetrahydrofolate to 5,10-methenyltetrahydrofolate and then the hydrolysis of 5,10-methenyltetrahydrofolate to 10-formyltetrahydrofolate. The polypeptide is Bifunctional protein FolD (Koribacter versatilis (strain Ellin345)).